The chain runs to 247 residues: UPF0309 protein Lm4b_02611 (247 aa).

Residues 31–214 form the SIS domain; sequence VAESIENDGV…ETMVNDNFTP (184 aa).

This sequence belongs to the UPF0309 family.

The polypeptide is UPF0309 protein Lm4b_02611 (Listeria monocytogenes serotype 4b (strain CLIP80459)).